The sequence spans 198 residues: Recombination protein RecR (198 aa).

The C4-type zinc finger occupies 57–72 (CTICGHITDTDPCYIC). Residues 80–175 (TTICVVQDPK…KVTRIAHGLP (96 aa)) form the Toprim domain.

The protein belongs to the RecR family.

Functionally, may play a role in DNA repair. It seems to be involved in an RecBC-independent recombinational process of DNA repair. It may act with RecF and RecO. In Geobacillus kaustophilus (strain HTA426), this protein is Recombination protein RecR.